The sequence spans 223 residues: N-terminal Xaa-Pro-Lys N-methyltransferase 1 (223 aa).

Residues G69, R74, D91–T93, L119–Q120, and Q135 each bind S-adenosyl-L-methionine.

The protein belongs to the methyltransferase superfamily. NTM1 family.

The protein resides in the nucleus. It catalyses the reaction N-terminal L-alanyl-L-prolyl-L-lysyl-[protein] + 3 S-adenosyl-L-methionine = N-terminal N,N,N-trimethyl-L-alanyl-L-prolyl-L-lysyl-[protein] + 3 S-adenosyl-L-homocysteine + 3 H(+). It carries out the reaction N-terminal L-seryl-L-prolyl-L-lysyl-[protein] + 3 S-adenosyl-L-methionine = N-terminal N,N,N-trimethyl-L-seryl-L-prolyl-L-lysyl-[protein] + 3 S-adenosyl-L-homocysteine + 3 H(+). The enzyme catalyses N-terminal L-prolyl-L-prolyl-L-lysyl-[protein] + 2 S-adenosyl-L-methionine = N-terminal N,N-dimethyl-L-prolyl-L-prolyl-L-lysyl-[protein] + 2 S-adenosyl-L-homocysteine + 2 H(+). Functionally, distributive alpha-N-methyltransferase that methylates the N-terminus of target proteins containing the N-terminal motif [Ala/Gly/Pro/Ser]-Pro-Lys when the initiator Met is cleaved. Specifically catalyzes mono-, di- or tri-methylation of the exposed alpha-amino group of the Ala, Gly or Ser residue in the [Ala/Gly/Ser]-Pro-Lys motif and mono- or di-methylation of Pro in the Pro-Pro-Lys motif. Required during mitosis for normal bipolar spindle formation and chromosome segregation via its action on target proteins. The protein is N-terminal Xaa-Pro-Lys N-methyltransferase 1 (ntmt1) of Danio rerio (Zebrafish).